The chain runs to 346 residues: Holliday junction branch migration complex subunit RuvB (346 aa).

Residues 1 to 181 (MSDRNPLIDA…FGIPTRLNFY (181 aa)) are large ATPase domain (RuvB-L). Residues Leu20, Arg21, Gly62, Lys65, Thr66, Thr67, 128 to 130 (EDF), Arg171, Tyr181, and Arg218 each bind ATP. A Mg(2+)-binding site is contributed by Thr66. The small ATPAse domain (RuvB-S) stretch occupies residues 182–252 (TVEELEYIVR…IADEALSRLE (71 aa)). The head domain (RuvB-H) stretch occupies residues 255-346 (NRGLDQLDRR…SQYGLFMEDE (92 aa)). DNA contacts are provided by Arg291, Arg310, and Arg315.

Belongs to the RuvB family. In terms of assembly, homohexamer. Forms an RuvA(8)-RuvB(12)-Holliday junction (HJ) complex. HJ DNA is sandwiched between 2 RuvA tetramers; dsDNA enters through RuvA and exits via RuvB. An RuvB hexamer assembles on each DNA strand where it exits the tetramer. Each RuvB hexamer is contacted by two RuvA subunits (via domain III) on 2 adjacent RuvB subunits; this complex drives branch migration. In the full resolvosome a probable DNA-RuvA(4)-RuvB(12)-RuvC(2) complex forms which resolves the HJ.

Its subcellular location is the cytoplasm. The enzyme catalyses ATP + H2O = ADP + phosphate + H(+). In terms of biological role, the RuvA-RuvB-RuvC complex processes Holliday junction (HJ) DNA during genetic recombination and DNA repair, while the RuvA-RuvB complex plays an important role in the rescue of blocked DNA replication forks via replication fork reversal (RFR). RuvA specifically binds to HJ cruciform DNA, conferring on it an open structure. The RuvB hexamer acts as an ATP-dependent pump, pulling dsDNA into and through the RuvAB complex. RuvB forms 2 homohexamers on either side of HJ DNA bound by 1 or 2 RuvA tetramers; 4 subunits per hexamer contact DNA at a time. Coordinated motions by a converter formed by DNA-disengaged RuvB subunits stimulates ATP hydrolysis and nucleotide exchange. Immobilization of the converter enables RuvB to convert the ATP-contained energy into a lever motion, pulling 2 nucleotides of DNA out of the RuvA tetramer per ATP hydrolyzed, thus driving DNA branch migration. The RuvB motors rotate together with the DNA substrate, which together with the progressing nucleotide cycle form the mechanistic basis for DNA recombination by continuous HJ branch migration. Branch migration allows RuvC to scan DNA until it finds its consensus sequence, where it cleaves and resolves cruciform DNA. The chain is Holliday junction branch migration complex subunit RuvB from Brucella anthropi (strain ATCC 49188 / DSM 6882 / CCUG 24695 / JCM 21032 / LMG 3331 / NBRC 15819 / NCTC 12168 / Alc 37) (Ochrobactrum anthropi).